Reading from the N-terminus, the 275-residue chain is Tryptophan synthase alpha chain (275 aa).

Residues glutamate 60 and aspartate 71 each act as proton acceptor in the active site.

It belongs to the TrpA family. Tetramer of two alpha and two beta chains.

The enzyme catalyses (1S,2R)-1-C-(indol-3-yl)glycerol 3-phosphate + L-serine = D-glyceraldehyde 3-phosphate + L-tryptophan + H2O. Its pathway is amino-acid biosynthesis; L-tryptophan biosynthesis; L-tryptophan from chorismate: step 5/5. Its function is as follows. The alpha subunit is responsible for the aldol cleavage of indoleglycerol phosphate to indole and glyceraldehyde 3-phosphate. In Prochlorococcus marinus (strain MIT 9313), this protein is Tryptophan synthase alpha chain.